The sequence spans 97 residues: RNA-binding protein Hfq (97 aa).

A Sm domain is found at 10-70; the sequence is DPFLNALRKE…ISTIVPARSV (61 aa).

Belongs to the Hfq family. Homohexamer.

In terms of biological role, RNA chaperone that binds small regulatory RNA (sRNAs) and mRNAs to facilitate mRNA translational regulation in response to envelope stress, environmental stress and changes in metabolite concentrations. Also binds with high specificity to tRNAs. This chain is RNA-binding protein Hfq, found in Neisseria gonorrhoeae (strain ATCC 700825 / FA 1090).